Consider the following 363-residue polypeptide: Peroxisomal (S)-2-hydroxyacid oxidase GLO4 (363 aa).

An FMN hydroxy acid dehydrogenase domain is found at 1–357 (MDQIVNVDEF…TRNHVRTENE (357 aa)). Residues 78–80 (PTA), S107, 128–130 (QIY), and T156 each bind FMN. Y130 lines the a 2-oxocarboxylate pocket. R165 is a binding site for a 2-oxocarboxylate. FMN-binding residues include K228 and S250. H252 functions as the Proton acceptor in the catalytic mechanism. R255 provides a ligand contact to a 2-oxocarboxylate. FMN-binding positions include 283–287 (DGGVR) and 306–307 (GR). Positions 361-363 (SML) match the Microbody targeting signal motif.

The protein belongs to the FMN-dependent alpha-hydroxy acid dehydrogenase family. In terms of assembly, homotetramer. Requires FMN as cofactor.

Its subcellular location is the peroxisome. The catalysed reaction is a (2S)-2-hydroxycarboxylate + O2 = a 2-oxocarboxylate + H2O2. It carries out the reaction 2-hydroxydodecanoate + O2 = 2-oxododecanoate + H2O2. It catalyses the reaction 2-hydroxyhexanoate + O2 = 2-oxohexanoate + H2O2. The enzyme catalyses 2-hydroxyoctanoate + O2 = 2-oxooctanoate + H2O2. The catalysed reaction is (S)-lactate + O2 = pyruvate + H2O2. The protein operates within lipid metabolism; fatty acid metabolism. Oxidase that catalyzes the oxidation of a broad range of 2-hydroxyacids to the corresponding 2-oxoacids, with a reduction of O2 to H2O2. Displays the highest activity with the long-chain fatty acid 2-hydroxydodecanoate and has intermediate activity with 2-hydroxyhexanoate, 2-hydroxyoctanote, and the short-chain hydroxyacid (S)-lactate (L-lactate). With much lower activity, it can also use glycolate, leucic acid, valic acid, and isoleucic acid as substrates in vitro. Cannot use 2-hydroxyhexadecanoate or D-lactate as substrates. May be involved in a general medium- and long-chain fatty acid catabolic pathway such as alpha-oxidation. The sequence is that of Peroxisomal (S)-2-hydroxyacid oxidase GLO4 (GLO4) from Arabidopsis thaliana (Mouse-ear cress).